We begin with the raw amino-acid sequence, 182 residues long: ATP synthase subunit delta (182 aa).

It belongs to the ATPase delta chain family. In terms of assembly, F-type ATPases have 2 components, F(1) - the catalytic core - and F(0) - the membrane proton channel. F(1) has five subunits: alpha(3), beta(3), gamma(1), delta(1), epsilon(1). F(0) has three main subunits: a(1), b(2) and c(10-14). The alpha and beta chains form an alternating ring which encloses part of the gamma chain. F(1) is attached to F(0) by a central stalk formed by the gamma and epsilon chains, while a peripheral stalk is formed by the delta and b chains.

The protein localises to the cell membrane. In terms of biological role, f(1)F(0) ATP synthase produces ATP from ADP in the presence of a proton or sodium gradient. F-type ATPases consist of two structural domains, F(1) containing the extramembraneous catalytic core and F(0) containing the membrane proton channel, linked together by a central stalk and a peripheral stalk. During catalysis, ATP synthesis in the catalytic domain of F(1) is coupled via a rotary mechanism of the central stalk subunits to proton translocation. Its function is as follows. This protein is part of the stalk that links CF(0) to CF(1). It either transmits conformational changes from CF(0) to CF(1) or is implicated in proton conduction. The sequence is that of ATP synthase subunit delta from Lactobacillus gasseri (strain ATCC 33323 / DSM 20243 / BCRC 14619 / CIP 102991 / JCM 1131 / KCTC 3163 / NCIMB 11718 / NCTC 13722 / AM63).